Consider the following 448-residue polypeptide: Acyl-lipid (9-3)-desaturase (448 aa).

The Cytochrome b5 heme-binding domain occupies 6 to 90; that stretch reads KKYITSDELK…LKDYSVSEVS (85 aa). Heme contacts are provided by His-41 and His-64. The next 2 membrane-spanning stretches (helical) occupy residues 112–132 and 137–157; these read IMFA…YGVL and VLVH…SGWI. The Histidine box-1 signature appears at 159 to 163; that stretch reads HDAGH. A helical transmembrane segment spans residues 172-192; it reads LNKFMGIFAANCLSGISIGWW. The short motif at 196 to 200 is the Histidine box-2 element; that stretch reads HNAHH. 3 consecutive transmembrane segments (helical) span residues 212-232, 254-274, and 286-306; these read LQYI…TSHF, FYPI…IMLL, and LLGC…LPNW. A Histidine box-3 motif is present at residues 373–377; the sequence is QIEHH.

The protein belongs to the fatty acid desaturase type 1 family.

It localises to the endoplasmic reticulum membrane. The enzyme catalyses (9Z,12Z,15Z)-octadecatrienoyl-containing glycerolipid + 2 Fe(II)-[cytochrome b5] + O2 + 2 H(+) = (6Z,9Z,12Z,15Z)-octadecatetraenoyl-containing glycerolipid + 2 Fe(III)-[cytochrome b5] + 2 H2O. It carries out the reaction a (9Z,12Z)-octadecadienoyl-containing glycerolipid + 2 Fe(II)-[cytochrome b5] + O2 + 2 H(+) = (6Z,9Z,12Z)-octadecatrienoyl-containing glycerolipid + 2 Fe(III)-[cytochrome b5] + 2 H2O. It participates in lipid metabolism; polyunsaturated fatty acid biosynthesis. Fatty acid desaturase able to introduce a delta(6)-double bond into delta(9)-unsaturated fatty-acid substrates. Can use both linoleic acid (18:2(9Z,12Z)) and alpha-linolenic acid (18:3(9Z,12Z,15Z)) as substrates. This Borago officinalis (Bourrache) protein is Acyl-lipid (9-3)-desaturase.